A 152-amino-acid chain; its full sequence is Protein PLANT CADMIUM RESISTANCE 2 (152 aa).

The chain crosses the membrane as a helical span at residues 57–79 (TAGALYALIAVVTGCACIYSCFY).

Belongs to the cornifelin family. In terms of assembly, homooligomer. Expressed in roots, leaves, shoots, stems, flowers and siliques. In leaves, restricted mainly to the vascular tissue. Expressed in all cells in the root tip, in the vascular tissue and the epidermis in the elongation zone, and only in the epidermal cells in the root hair zone.

The protein localises to the cell membrane. Zinc transporter acting in both zinc extrusion and long-distance zinc transport. Involved in the loading of zinc into the xyleme and in the detoxification of excess zinc at the epidermal cells. Acts independently from the zinc transporters HMA2 and HMA4. May be also involved in cadmium resistance. This chain is Protein PLANT CADMIUM RESISTANCE 2 (PCR2), found in Arabidopsis thaliana (Mouse-ear cress).